Here is a 368-residue protein sequence, read N- to C-terminus: p21-activated protein kinase-interacting protein 1-like (368 aa).

5 WD repeats span residues 45 to 82, 85 to 123, 126 to 165, 207 to 245, and 248 to 289; these read AHTA…EHGA, HHDG…CLKT, AHKG…SAFI, AFTK…CVCE, and AHEN…IESP.

It is found in the nucleus. The protein resides in the nucleolus. Negatively regulates the PAK1 kinase. PAK1 is a member of the PAK kinase family, which has been shown to play a positive role in the regulation of signaling pathways involving MAPK8 and RELA. PAK1 exists as an inactive homodimer, which is activated by binding of small GTPases such as CDC42 to an N-terminal regulatory domain. PAK1IP1 also binds to the N-terminus of PAK1, and inhibits the specific activation of PAK1 by CDC42. May be involved in ribosomal large subunit assembly. This Danio rerio (Zebrafish) protein is p21-activated protein kinase-interacting protein 1-like (pak1ip1).